A 186-amino-acid chain; its full sequence is UPF0398 protein LBUL_0921 (186 aa).

This sequence belongs to the UPF0398 family.

The sequence is that of UPF0398 protein LBUL_0921 from Lactobacillus delbrueckii subsp. bulgaricus (strain ATCC BAA-365 / Lb-18).